Here is a 246-residue protein sequence, read N- to C-terminus: Adenylate kinase 4 (246 aa).

N-acetylalanine is present on Ala-2. ATP is bound at residue 43 to 48; the sequence is GSGKGT. An NMP region spans residues 63 to 92; it reads STGDMLRAAVASKTPLGVKAKEAMEKGELV. AMP-binding positions include Thr-64, Arg-69, 90–92, 118–121, and Gln-125; these read ELV and GFPR. The interval 159–196 is LID; sequence GRWIHPSSGRSYHTKFAPPKTPGVDDITGEPLIQRKDD. Arg-160 contributes to the ATP binding site. AMP contacts are provided by Arg-193 and Arg-204.

It belongs to the adenylate kinase family. In terms of assembly, monomer.

The protein resides in the cytoplasm. It catalyses the reaction AMP + ATP = 2 ADP. Functionally, catalyzes the reversible transfer of the terminal phosphate group between ATP and AMP. Plays an important role in cellular energy homeostasis and in adenine nucleotide metabolism. The polypeptide is Adenylate kinase 4 (ADK1) (Arabidopsis thaliana (Mouse-ear cress)).